A 415-amino-acid polypeptide reads, in one-letter code: Prostacyclin receptor (415 aa).

The disordered stretch occupies residues 1 to 21 (MMASDGHPGPPSVTPGSPLSA). The Extracellular segment spans residues 1-44 (MMASDGHPGPPSVTPGSPLSAGGREWQGMAGSCWNITYVQDSVG). 2 cysteine pairs are disulfide-bonded: C33-C193 and C120-C198. N35 carries N-linked (GlcNAc...) asparagine glycosylation. The helical transmembrane segment at 45-66 (PATSTLMFVAGVVGNGLALGIL) threads the bilayer. At 67–79 (GARRRSHPSAFAV) the chain is on the cytoplasmic side. The helical transmembrane segment at 80–104 (LVTGLAVTDLLGTCFLSPAVFVAYA) threads the bilayer. Over 105 to 122 (RNSSLLGLAHGGTMLCDT) the chain is Extracellular. The chain crosses the membrane as a helical span at residues 123 to 143 (FAFAMTFFGLASTLILFAMAV). The Cytoplasmic segment spans residues 144-162 (ERCLALSHPYLYAQLDGPR). Residues 163-186 (CARFALPSIYAFCCLFCSLPLLGL) traverse the membrane as a helical segment. Residues 187 to 215 (GEHQQYCPGSWCFIRMRSAQPGGCAFSLA) lie on the Extracellular side of the membrane. A helical membrane pass occupies residues 216 to 236 (YASLMALLVTSIFFCNGSVTL). At 237-263 (SLYHMYRQQRRHHGSFVPTSRAREDEV) the chain is on the cytoplasmic side. A helical transmembrane segment spans residues 264 to 288 (YHLILLALMTVIMAVCSLPLMIRGF). The Extracellular segment spans residues 289–301 (TQAIAPDSREMGD). Residues 302–322 (LLAFRFNAFNPILDPWVFILF) traverse the membrane as a helical segment. At 323–415 (RKAVFQRLKF…SEAIAACSLC (93 aa)) the chain is on the cytoplasmic side. The interval 349–370 (PLSRPASGRRDPPAPTSLQAKE) is disordered. Position 365 is a phosphoserine (S365). C412 carries the post-translational modification Cysteine methyl ester. A lipid anchor (S-farnesyl cysteine) is attached at C412. Residues 413 to 415 (SLC) constitute a propeptide, removed in mature form.

It belongs to the G-protein coupled receptor 1 family. As to quaternary structure, interacts (non-isoprenylated C-terminus) with PDZK1. In terms of processing, isoprenylation does not influence ligand binding but is required for efficient coupling to the effectors adenylyl cyclase and phospholipase C.

The protein resides in the cell membrane. Receptor for prostacyclin (prostaglandin I2 or PGI2). The activity of this receptor is mediated by G(s) proteins which activate adenylate cyclase. This chain is Prostacyclin receptor (Ptgir), found in Mus musculus (Mouse).